Consider the following 363-residue polypeptide: Chorismate synthase (363 aa).

The segment at 42–61 (QRDLDRRKPGTSRHTTQRQE) is disordered. Residues Arg48 and Arg54 each contribute to the NADP(+) site. Residues 125 to 127 (RSS), 237 to 238 (NA), Gly277, 292 to 296 (KPTSS), and Arg318 contribute to the FMN site.

It belongs to the chorismate synthase family. As to quaternary structure, homotetramer. Requires FMNH2 as cofactor.

It carries out the reaction 5-O-(1-carboxyvinyl)-3-phosphoshikimate = chorismate + phosphate. Its pathway is metabolic intermediate biosynthesis; chorismate biosynthesis; chorismate from D-erythrose 4-phosphate and phosphoenolpyruvate: step 7/7. Functionally, catalyzes the anti-1,4-elimination of the C-3 phosphate and the C-6 proR hydrogen from 5-enolpyruvylshikimate-3-phosphate (EPSP) to yield chorismate, which is the branch point compound that serves as the starting substrate for the three terminal pathways of aromatic amino acid biosynthesis. This reaction introduces a second double bond into the aromatic ring system. The sequence is that of Chorismate synthase from Pseudomonas aeruginosa (strain LESB58).